The following is a 397-amino-acid chain: Cysteine desulfurase IscS (397 aa).

Residues 72-73, N152, Q180, and 200-202 contribute to the pyridoxal 5'-phosphate site; these read GS and SAH. N6-(pyridoxal phosphate)lysine is present on K203. A pyridoxal 5'-phosphate-binding site is contributed by T238. The Cysteine persulfide intermediate role is filled by C328. C328 contacts [2Fe-2S] cluster.

Belongs to the class-V pyridoxal-phosphate-dependent aminotransferase family. NifS/IscS subfamily. In terms of assembly, homodimer. Forms a heterotetramer with IscU, interacts with other sulfur acceptors. Pyridoxal 5'-phosphate is required as a cofactor.

It is found in the cytoplasm. It catalyses the reaction (sulfur carrier)-H + L-cysteine = (sulfur carrier)-SH + L-alanine. It functions in the pathway cofactor biosynthesis; iron-sulfur cluster biosynthesis. Master enzyme that delivers sulfur to a number of partners involved in Fe-S cluster assembly, tRNA modification or cofactor biosynthesis. Catalyzes the removal of elemental sulfur atoms from cysteine to produce alanine. Functions as a sulfur delivery protein for Fe-S cluster synthesis onto IscU, an Fe-S scaffold assembly protein, as well as other S acceptor proteins. This Clostridium botulinum (strain Kyoto / Type A2) protein is Cysteine desulfurase IscS.